The following is a 393-amino-acid chain: MTTYSNKGPKPERGRFLHFHSVTFWVGNAKQAASFYCNKMGFEPLAYKGLETGSREVVSHVIKQGKIVFVLCSALNPWNKEMGDHLVKHGDGVKDIAFEVEDCEHIVQKARERGAKIVREPWVEEDKFGKVKFAVLQTYGDTTHTLVEKINYTGRFLPGFEAPTYKDTLLPKLPSCNLEIIDHIVGNQPDQEMESASEWYLKNLQFHRFWSVDDTQVHTEYSSLRSIVVANYEESIKMPINEPAPGRKKSQIQEYVDYNGGAGVQHIALRTEDIITTIRHLRERGMEFLAVPSSYYRLLRENLKTSKIQVKENMDVLEELKILVDYDEKGYLLQIFTKPMQDRPTLFLEVIQRHNHQGFGAGNFNSLFKAFEEEQALRGNLTDLETNGVRSGM.

N-acetylthreonine is present on Thr2. 2 VOC domains span residues 18–149 (HFHS…LVEK) and 180–338 (IIDH…IFTK). N6-succinyllysine is present on Lys132. His183 is a binding site for Fe cation. Phosphoserine is present on residues Ser211, Ser226, and Ser250. Fe cation is bound by residues His266 and Glu349.

The protein belongs to the 4HPPD family. Homodimer. Fe cation is required as a cofactor.

It localises to the cytoplasm. It is found in the endoplasmic reticulum membrane. The protein localises to the golgi apparatus membrane. It carries out the reaction 3-(4-hydroxyphenyl)pyruvate + O2 = homogentisate + CO2. It participates in amino-acid degradation; L-phenylalanine degradation; acetoacetate and fumarate from L-phenylalanine: step 3/6. In terms of biological role, catalyzes the conversion of 4-hydroxyphenylpyruvic acid to homogentisic acid, one of the steps in tyrosine catabolism. The sequence is that of 4-hydroxyphenylpyruvate dioxygenase (Hpd) from Rattus norvegicus (Rat).